The following is a 597-amino-acid chain: C4b-binding protein alpha chain (597 aa).

Positions Met-1 to Gly-48 are cleaved as a signal peptide. Sushi domains lie at Asn-49 to Tyr-110, Lys-111 to Ile-172, Val-173 to Lys-236, Ile-237 to Pro-296, Asn-297 to Ala-362, Leu-363 to Asp-424, Ile-425 to Ala-482, and Leu-483 to Trp-540. Disulfide bonds link Cys-50–Cys-96, Cys-81–Cys-108, Cys-113–Cys-154, Cys-140–Cys-170, Cys-175–Cys-217, Cys-203–Cys-234, Cys-239–Cys-281, Cys-267–Cys-294, Cys-299–Cys-348, Cys-332–Cys-360, Cys-365–Cys-409, Cys-399–Cys-422, Cys-426–Cys-468, Cys-454–Cys-480, Cys-484–Cys-525, and Cys-511–Cys-538. A glycan (N-linked (GlcNAc...) asparagine) is linked at Asn-221. 2 N-linked (GlcNAc...) asparagine glycosylation sites follow: Asn-506 and Asn-528.

As to quaternary structure, disulfide-linked complex of alpha and beta chains of 3 possible sorts: a 570 kDa complex of 7 alpha chains and 1 beta chain, a 530 kDa homoheptamer of alpha chains or a 500 kDa complex of 6 alpha chains and 1 beta chain. The central body of the alpha chain homomer supports tentacles, each with the binding site for C4b at the end. (Microbial infection) Interacts with Staphylococcus aureus protein SdrE; this interaction inhibits complement-mediated bacterial opsonization. As to expression, chylomicrons in the plasma.

The protein resides in the secreted. Its function is as follows. Controls the classical pathway of complement activation. It binds as a cofactor to C3b/C4b inactivator (C3bINA), which then hydrolyzes the complement fragment C4b. It also accelerates the degradation of the C4bC2a complex (C3 convertase) by dissociating the complement fragment C2a. Alpha chain binds C4b. It also interacts with anticoagulant protein S and with serum amyloid P component. The sequence is that of C4b-binding protein alpha chain (C4BPA) from Homo sapiens (Human).